The sequence spans 504 residues: Bacterial leucyl aminopeptidase (504 aa).

The first 21 residues, 1 to 21, serve as a signal peptide directing secretion; that stretch reads MKYTKTLLAMVLSATFCQAYA. A propeptide spanning residues 22–106 is cleaved from the precursor; sequence EDKVWISIGA…AMPTTLASFV (85 aa). Residues H203, D223, E258, and D285 each coordinate Zn(2+). C329 and C333 are joined by a disulfide. Position 362 (H362) interacts with Zn(2+). Positions 406–504 are cleaved as a propeptide — removed in mature form; that stretch reads LEDGVPVTDL…SGASLKASTF (99 aa).

This sequence belongs to the peptidase M28 family. M28E subfamily. Zn(2+) is required as a cofactor.

It is found in the secreted. It carries out the reaction Release of an N-terminal amino acid, preferentially leucine, but not glutamic or aspartic acids.. This chain is Bacterial leucyl aminopeptidase, found in Vibrio proteolyticus (Aeromonas proteolytica).